Here is a 337-residue protein sequence, read N- to C-terminus: Diacylglycerol acyltransferase/mycolyltransferase Ag85A (337 aa).

Residues 1–42 (MKLVDRFRGAATGTSRRLMVGAVGAALLSGLVGFVGGSATAS) form the signal peptide. 85 to 86 (MR) provides a ligand contact to substrate. A fibronectin-binding region spans residues 101 to 111 (FEWYYQSGISV). The cysteines at positions 130 and 135 are disulfide-linked. 2 residues coordinate substrate: Ser169 and Asp197. Ser169 serves as the catalytic Nucleophile. Glu273 is an active-site residue. Residues 275 to 278 (FVRT), Lys282, and 305 to 307 (HSW) contribute to the substrate site. His305 is an active-site residue.

The protein belongs to the mycobacterial A85 antigen family. In terms of assembly, homodimer.

The protein localises to the secreted. It is found in the cell wall. Its subcellular location is the cytoplasm. It catalyses the reaction an acyl-CoA + a 1,2-diacyl-sn-glycerol = a triacyl-sn-glycerol + CoA. It carries out the reaction 2 alpha,alpha'-trehalose 6-mycolate = alpha,alpha'-trehalose 6,6'-bismycolate + alpha,alpha-trehalose. In terms of biological role, the antigen 85 proteins (FbpA, FbpB, FbpC) are responsible for the high affinity of mycobacteria for fibronectin, a large adhesive glycoprotein, which facilitates the attachment of M.tuberculosis to murine alveolar macrophages (AMs). They also help to maintain the integrity of the cell wall by catalyzing the transfer of mycolic acids to cell wall arabinogalactan, and through the synthesis of alpha,alpha-trehalose dimycolate (TDM, cord factor). They catalyze the transfer of a mycoloyl residue from one molecule of alpha,alpha-trehalose monomycolate (TMM) to another TMM, leading to the formation of TDM. FbpA mediates triacylglycerol (TAG) formation with long-chain acyl-CoA as the acyl donor and 1,2-dipalmitoyl-sn-glycerol (1,2-dipalmitin) as the acyl acceptor. It has a preference for C26:0-CoA over C18:1-CoA. The sequence is that of Diacylglycerol acyltransferase/mycolyltransferase Ag85A (fbpA) from Mycobacterium ulcerans.